The primary structure comprises 330 residues: Putative pentatricopeptide repeat-containing protein At5g36300 (330 aa).

PPR repeat units follow at residues 10–44, 45–75, 83–113, 114–148, 149–179, 185–215, 231–265, 266–296, and 302–330; these read SLSM…GSRP, DPLS…VVRF, VRLY…KFRL, NSFV…GLPM, DVEI…LQRS, NIRT…IFED, SANL…GIEP, NLIM…IKET, and DVVT…LVTL.

It belongs to the PPR family. P subfamily.

In Arabidopsis thaliana (Mouse-ear cress), this protein is Putative pentatricopeptide repeat-containing protein At5g36300.